A 164-amino-acid polypeptide reads, in one-letter code: MKFVILLTIGLLVVAAIPQRRQQQQQQQQQQQRDEREIPPFLEGAPPSVIDEFYNLLKTDENKTDQQTEADVEAFINRLGGSYKVRFTQFMEEVKKARADYERIHQQAVARFSPAAKDADARMSAIADSPHLTTRQKSQQIQAIMDSLSESVRREIINALSPQE.

A signal peptide spans 1–16 (MKFVILLTIGLLVVAA). The disordered stretch occupies residues 24–43 (QQQQQQQQQRDEREIPPFLE).

This sequence belongs to the SXP/RAL-2 family. As to expression, high levels in the hypodermal layer of the adult female.

This is OV-17 antigen (OV17) from Onchocerca volvulus.